Consider the following 435-residue polypeptide: Adenylosuccinate synthetase (435 aa).

GTP-binding positions include 11 to 17 and 39 to 41; these read GDEGKGK and GHT. The active-site Proton acceptor is aspartate 12. Mg(2+) is bound by residues aspartate 12 and glycine 39. IMP is bound by residues 12–15, 37–40, threonine 128, arginine 142, glutamine 223, threonine 238, and arginine 302; these read DEGK and NAGH. Histidine 40 acts as the Proton donor in catalysis. 298–304 is a substrate binding site; sequence SVTGRPR. Residues arginine 304, 330–332, and 412–414 each bind GTP; these read KLD and STG.

The protein belongs to the adenylosuccinate synthetase family. Homodimer. Mg(2+) is required as a cofactor.

It localises to the cytoplasm. It carries out the reaction IMP + L-aspartate + GTP = N(6)-(1,2-dicarboxyethyl)-AMP + GDP + phosphate + 2 H(+). It functions in the pathway purine metabolism; AMP biosynthesis via de novo pathway; AMP from IMP: step 1/2. Plays an important role in the de novo pathway of purine nucleotide biosynthesis. Catalyzes the first committed step in the biosynthesis of AMP from IMP. The sequence is that of Adenylosuccinate synthetase from Coxiella burnetii (strain CbuK_Q154) (Coxiella burnetii (strain Q154)).